The primary structure comprises 378 residues: P2X receptor A (378 aa).

Over 1-27 (MGFSFDWDDIFQYSTVKIVRIRDRRLG) the chain is Cytoplasmic. Residues 28 to 48 (ILHLSFLVGIVAYIVVYSAII) form a helical membrane-spanning segment. The Lumenal portion of the chain corresponds to 49-307 (KKGYLFTEVP…IQTGTIGSFH (259 aa)). The interval 290 to 303 (RHGIRVIFIQTGTI) is pore-forming motif. A helical transmembrane segment spans residues 308-328 (FQTLLLTLVSGLGLLAVATTV). At 329–378 (VDQLAIRLLPQRKSYSSLKFQVTESMSNPMKKRITTDEGEDVLYTRIEGL) the chain is on the cytoplasmic side.

Belongs to the P2X receptor family.

Its subcellular location is the contractile vacuole membrane. P2X receptors are ATP-gated ion channels that play a role in intracellular calcium signaling. Not required for the purinergic response to extracellular nucleotides. Inward currents evoked by intracellular ATP and ATP analogs. Exclusively selective for ATP over other nucleotides. Insensitive to P2 receptor antagonists PPADS, suramin and 2',3'-O-(2,4,6-trinitrophenyl)-ATP but inhibited by nanomolar concentrations of copper and sodium ion. More permeable to ammonium than either sodium or potassium ions and less permeable to choline. It has been reported that p2xA is not essential for osmoregulation, however this information is in contradiction with another source which indicates that p2xA is required for osmoregulation. Found to be permeable to chloride ions. Inhibited by copper and sodium ions. This chain is P2X receptor A (p2xA), found in Dictyostelium discoideum (Social amoeba).